We begin with the raw amino-acid sequence, 283 residues long: MEEYRSKKRFGQNFLQDSHFLHKIIQSIPDIPIQCIEIGVGLGDLTQELLKIESLIAYEVDLDLCSLLNKKFSNQIQSGRLNIIYKDILNLPSQQAWLHTHEYKVVSNLPYYIATHIILRLLRDRFCRAFLVMTQKEVAQKFCATTGQKEFCALSVLVESFGKAKMLFEVPKEAFSPMPKVTSSVFVIHKYSQQNQIEDSFLCDLESFLKIAFYAPRKTLFKNLSQVFDKKLLEEVFENENIKSNARAHEVKTKSFHHILQFLKKRNDNGKQTLTRTTKQRPS.

S-adenosyl-L-methionine is bound by residues N13, L15, G39, E59, D87, and N108.

Belongs to the class I-like SAM-binding methyltransferase superfamily. rRNA adenine N(6)-methyltransferase family. RsmA subfamily.

It is found in the cytoplasm. The enzyme catalyses adenosine(1518)/adenosine(1519) in 16S rRNA + 4 S-adenosyl-L-methionine = N(6)-dimethyladenosine(1518)/N(6)-dimethyladenosine(1519) in 16S rRNA + 4 S-adenosyl-L-homocysteine + 4 H(+). In terms of biological role, specifically dimethylates two adjacent adenosines (A1518 and A1519) in the loop of a conserved hairpin near the 3'-end of 16S rRNA in the 30S particle. May play a critical role in biogenesis of 30S subunits. The protein is Ribosomal RNA small subunit methyltransferase A of Helicobacter hepaticus (strain ATCC 51449 / 3B1).